The chain runs to 123 residues: Glycine cleavage system H protein (123 aa).

One can recognise a Lipoyl-binding domain in the interval 22–104; sequence VATVGITSYA…FGAGWLVKVR (83 aa). The residue at position 63 (Lys63) is an N6-lipoyllysine.

Belongs to the GcvH family. In terms of assembly, the glycine cleavage system is composed of four proteins: P, T, L and H. It depends on (R)-lipoate as a cofactor.

Its function is as follows. The glycine cleavage system catalyzes the degradation of glycine. The H protein shuttles the methylamine group of glycine from the P protein to the T protein. The chain is Glycine cleavage system H protein from Clavibacter sepedonicus (Clavibacter michiganensis subsp. sepedonicus).